The sequence spans 468 residues: 6-phospho-beta-galactosidase (468 aa).

D-galactose 6-phosphate contacts are provided by Q19, H116, N159, E160, and N297. The active-site Proton donor is the E160. The Nucleophile role is filled by E375. D-galactose 6-phosphate-binding residues include S428, W429, K435, and Y437.

Belongs to the glycosyl hydrolase 1 family.

It carries out the reaction a 6-phospho-beta-D-galactoside + H2O = D-galactose 6-phosphate + an alcohol. Its pathway is carbohydrate metabolism; lactose degradation; D-galactose 6-phosphate and beta-D-glucose from lactose 6-phosphate: step 1/1. In Streptococcus agalactiae serotype III (strain NEM316), this protein is 6-phospho-beta-galactosidase.